We begin with the raw amino-acid sequence, 170 residues long: CASP-like protein 2D1 (170 aa).

Residues 1-4 (MLKL) are Cytoplasmic-facing. The helical transmembrane segment at 5–25 (LDFSLRLSVIPLSVATIWLTV) threads the bilayer. Residues 26–47 (TNKQDNSIYGYLKYSDLTGLKY) are Extracellular-facing. A helical transmembrane segment spans residues 48 to 68 (MVFISGICASYAFIAAVSTWI). Topologically, residues 69 to 83 (RCIVTKTWLFFVSDQ) are cytoplasmic. A helical transmembrane segment spans residues 84–104 (IVAYLMVTSGTAVLEILYLAY). Topologically, residues 105 to 127 (NGDREVSWSEACTSYGKFCYRMK) are extracellular. The chain crosses the membrane as a helical span at residues 128–148 (LAVILHALALSCFIILAVISA). The Cytoplasmic segment spans residues 149–170 (YRAFSIFEPPLVPSKVVEEDRA).

This sequence belongs to the Casparian strip membrane proteins (CASP) family. As to quaternary structure, homodimer and heterodimers.

It is found in the cell membrane. This is CASP-like protein 2D1 from Populus trichocarpa (Western balsam poplar).